Here is an 899-residue protein sequence, read N- to C-terminus: Putative lipoxygenase 5 (899 aa).

Disordered stretches follow at residues 15-34 (AGSRGMGKGASRRRTARSTA), 48-68 (APVEQQRGAGRPEAHPQSVAA), and 258-291 (VASARPVLGGEQMPYPRRMRTGRPSTATDASAES). Residues 68 to 204 (ARAVVTVRRR…VSRDRRVFFS (137 aa)) enclose the PLAT domain. Positions 207-899 (PYLPSETPPG…CRGVPNSVTI (693 aa)) constitute a Lipoxygenase domain. Fe cation contacts are provided by His559, His564, His751, Asn755, and Ile899.

Belongs to the lipoxygenase family. It depends on Fe cation as a cofactor.

It carries out the reaction (9Z,12Z)-octadecadienoate + O2 = (13S)-hydroperoxy-(9Z,11E)-octadecadienoate. The enzyme catalyses (9Z,12Z,15Z)-octadecatrienoate + O2 = (13S)-hydroperoxy-(9Z,11E,15Z)-octadecatrienoate. Its pathway is lipid metabolism; oxylipin biosynthesis. Plant lipoxygenase may be involved in a number of diverse aspects of plant physiology including growth and development, pest resistance, and senescence or responses to wounding. Catalyzes the hydroperoxidation of lipids containing a cis,cis-1,4-pentadiene structure. This chain is Putative lipoxygenase 5, found in Oryza sativa subsp. japonica (Rice).